The primary structure comprises 200 residues: Transgelin (200 aa).

Residue Ala2 is modified to N-acetylalanine. A Calponin-homology (CH) domain is found at 24–137; sequence DELEDRLVEW…RTLVALGSLA (114 aa). Residues 175–199 form a Calponin-like repeat; the sequence is IGLQMGTNKGASQAGMSYGRPRQII.

Belongs to the calponin family. In terms of assembly, monomer. Gizzard, uterus, intestine, esophagus, aorta, and trace amounts in brain, liver and heart.

Its subcellular location is the cytoplasm. Its function is as follows. Actin cross-linking/gelling protein. The sequence is that of Transgelin (TAGLN) from Gallus gallus (Chicken).